The following is an 896-amino-acid chain: Translation initiation factor IF-2 (896 aa).

Residues 46-315 (LAHLNRQHGG…FNKPAQPVER (270 aa)) are disordered. The span at 99 to 247 (SASEEQEREE…RKQQEKEDVH (149 aa)) shows a compositional bias: basic and acidic residues. Basic residues predominate over residues 269 to 278 (SRKRGKKRRR). Residues 279-288 (KDEESDDTPR) show a composition bias toward basic and acidic residues. The tr-type G domain occupies 396–565 (PRAPVVTVMG…LLQSEVLDLR (170 aa)). The tract at residues 405–412 (GHVDHGKT) is G1. 405–412 (GHVDHGKT) contacts GTP. The interval 430–434 (GITQH) is G2. Positions 451 to 454 (DTPG) are G3. Residues 451–455 (DTPGH) and 505–508 (NKMD) contribute to the GTP site. Residues 505-508 (NKMD) are G4. Positions 541 to 543 (SAH) are G5.

The protein belongs to the TRAFAC class translation factor GTPase superfamily. Classic translation factor GTPase family. IF-2 subfamily.

Its subcellular location is the cytoplasm. In terms of biological role, one of the essential components for the initiation of protein synthesis. Protects formylmethionyl-tRNA from spontaneous hydrolysis and promotes its binding to the 30S ribosomal subunits. Also involved in the hydrolysis of GTP during the formation of the 70S ribosomal complex. This chain is Translation initiation factor IF-2, found in Idiomarina loihiensis (strain ATCC BAA-735 / DSM 15497 / L2-TR).